Reading from the N-terminus, the 193-residue chain is DNA damage-inducible transcript 4-like protein (193 aa).

The protein belongs to the DDIT4 family. In terms of tissue distribution, up-regulated in atherosclerotic plaques relative to healthy segments of the same artery.

The protein localises to the cytoplasm. Its function is as follows. Inhibits cell growth by regulating the TOR signaling pathway upstream of the TSC1-TSC2 complex and downstream of AKT1. This Homo sapiens (Human) protein is DNA damage-inducible transcript 4-like protein (DDIT4L).